Here is a 495-residue protein sequence, read N- to C-terminus: Aspartyl/glutamyl-tRNA(Asn/Gln) amidotransferase subunit B (495 aa).

It belongs to the GatB/GatE family. GatB subfamily. In terms of assembly, heterotrimer of A, B and C subunits.

The enzyme catalyses L-glutamyl-tRNA(Gln) + L-glutamine + ATP + H2O = L-glutaminyl-tRNA(Gln) + L-glutamate + ADP + phosphate + H(+). It carries out the reaction L-aspartyl-tRNA(Asn) + L-glutamine + ATP + H2O = L-asparaginyl-tRNA(Asn) + L-glutamate + ADP + phosphate + 2 H(+). Functionally, allows the formation of correctly charged Asn-tRNA(Asn) or Gln-tRNA(Gln) through the transamidation of misacylated Asp-tRNA(Asn) or Glu-tRNA(Gln) in organisms which lack either or both of asparaginyl-tRNA or glutaminyl-tRNA synthetases. The reaction takes place in the presence of glutamine and ATP through an activated phospho-Asp-tRNA(Asn) or phospho-Glu-tRNA(Gln). This is Aspartyl/glutamyl-tRNA(Asn/Gln) amidotransferase subunit B from Methanosarcina acetivorans (strain ATCC 35395 / DSM 2834 / JCM 12185 / C2A).